Here is a 219-residue protein sequence, read N- to C-terminus: Ras-related protein Rab-3B (219 aa).

N-acetylalanine is present on alanine 2. Positions 31, 32, 33, 34, 35, 36, 37, 49, and 53 each coordinate GTP. Residue threonine 36 participates in Mg(2+) binding. Residues 45-58 (DTFTPAFVSTVGID) carry the Switch 1 motif. 2 residues coordinate Mg(2+): threonine 54 and aspartate 77. Positions 78–96 (TAGQERYRTITTAYYRGAM) match the Switch 2 motif. Residue glycine 80 coordinates GTP. Threonine 86 carries the post-translational modification Phosphothreonine. Residues asparagine 135, lysine 136, aspartate 138, alanine 166, and lysine 167 each contribute to the GTP site. Phosphoserine is present on residues serine 188 and serine 190. 2 S-geranylgeranyl cysteine lipidation sites follow: cysteine 217 and cysteine 219. Residue cysteine 219 is modified to Cysteine methyl ester.

It belongs to the small GTPase superfamily. Rab family. Interacts with RPH3A and RPH3AL. Interacts with RIMS1. Interacts with RIMS2. The GTP-bound form interacts with GAS8/DRC4 (via coiled-coil domains). Interacts with GDI2, and CHM; phosphorylation at Thr-86 disrupts these interactions. Interacts with MADD (via uDENN domain); the GTP-bound form is preferred for interaction. Requires Mg(2+) as cofactor. In terms of processing, phosphorylation of Thr-86 in the switch II region by LRRK2 prevents the association of RAB regulatory proteins, including CHM and RAB GDP dissociation inhibitor GDI2.

It localises to the cell membrane. The protein resides in the golgi apparatus. It carries out the reaction GTP + H2O = GDP + phosphate + H(+). With respect to regulation, regulated by guanine nucleotide exchange factors (GEFs) which promote the exchange of bound GDP for free GTP. Regulated by GTPase activating proteins (GAPs) which increase the GTP hydrolysis activity. Inhibited by GDP dissociation inhibitors (GDIs) which prevent Rab-GDP dissociation. Functionally, the small GTPases Rab are key regulators of intracellular membrane trafficking, from the formation of transport vesicles to their fusion with membranes. Rabs cycle between an inactive GDP-bound form and an active GTP-bound form that is able to recruit to membranes different sets of downstream effectors directly responsible for vesicle formation, movement, tethering and fusion. This Rattus norvegicus (Rat) protein is Ras-related protein Rab-3B.